Here is a 352-residue protein sequence, read N- to C-terminus: Ion-translocating oxidoreductase complex subunit D (352 aa).

Helical transmembrane passes span 20–40 (IMLLVLLAAVPGIAAQLWFFG), 42–62 (GTLVQILLASVSALLAEALVL), 89–109 (IPPLAPWWMVVLGTVFAVIIA), and 123–143 (PAMIGYVVLLISFPVQMTSWL). Thr-187 is modified (FMN phosphoryl threonine). A run of 5 helical transmembrane segments spans residues 214–234 (ILAGAGWQWVNLAWLAGGVWL), 242–262 (WHIPLSFLVTLALCATLGWLF), 267–287 (LAAPQIHLLSGATMLGAFFIL), 301–321 (LIFGALAGLLVWLIRSFGGYP), and 322–342 (DGVAFAVLLANITVPLIDYYT).

Belongs to the NqrB/RnfD family. In terms of assembly, the complex is composed of six subunits: RsxA, RsxB, RsxC, RsxD, RsxE and RsxG. It depends on FMN as a cofactor.

It localises to the cell inner membrane. Its function is as follows. Part of a membrane-bound complex that couples electron transfer with translocation of ions across the membrane. Required to maintain the reduced state of SoxR. This is Ion-translocating oxidoreductase complex subunit D from Escherichia coli O127:H6 (strain E2348/69 / EPEC).